A 220-amino-acid chain; its full sequence is Transmembrane emp24 domain-containing protein 1 (220 aa).

Residues 1 to 19 form the signal peptide; sequence MAWSSSFLFIVLPLAAAVA. At 20–187 the chain is on the extracellular side; the sequence is VQPQDTELTF…LQDSNLERVN (168 aa). The 83-residue stretch at 36-118 folds into the GOLD domain; that stretch reads QECFYQTTLY…EKLVFFELIF (83 aa). Residues 138–164 are a coiled coil; sequence ELLDIKLEDIKESIESVKSRLERSIQM. The helical transmembrane segment at 188 to 208 threads the bilayer; sequence FWSAINVGVLVTVAFLQVYML. The Cytoplasmic portion of the chain corresponds to 209 to 220; the sequence is KSLFDDKRKIRT. A COPII vesicle coat-binding motif is present at residues 211 to 212; that stretch reads LF. Residues 211 to 220 carry the COPI vesicle coat-binding motif; it reads LFDDKRKIRT.

The protein belongs to the EMP24/GP25L family. In terms of assembly, homodimer in endoplasmic reticulum, endoplasmic reticulum-Golgi intermediate compartment and cis-Golgi network. Interacts with IL1RL1. Interacts with RNF26; this interaction is important to modulate innate immune signaling through the cGAS-STING pathway.

The protein localises to the cell membrane. The protein resides in the endoplasmic reticulum membrane. It localises to the golgi apparatus. It is found in the cis-Golgi network membrane. Its subcellular location is the endoplasmic reticulum-Golgi intermediate compartment membrane. Its function is as follows. Potential role in vesicular protein trafficking, mainly in the early secretory pathway. May act as a cargo receptor at the lumenal side for incorporation of secretory cargo molecules into transport vesicles and may be involved in vesicle coat formation at the cytoplasmic side. Plays a positive role in IL-33-mediated IL-8 and IL-6 production by interacting with interleukin-33 receptor IL1RL1. Plays also a role in the modulation of innate immune signaling through the cGAS-STING pathway by interacting with RNF26. This chain is Transmembrane emp24 domain-containing protein 1 (tmed1), found in Xenopus tropicalis (Western clawed frog).